Reading from the N-terminus, the 112-residue chain is uncharacterized protein (112 aa).

Fe cation is bound by residues cysteine 39, cysteine 105, and cysteine 107.

The protein belongs to the HesB/IscA family. Ycf83 subfamily.

It localises to the plastid. Its subcellular location is the chloroplast. This is an uncharacterized protein from Galdieria sulphuraria (Red alga).